The sequence spans 309 residues: Ribonuclease Z (309 aa).

Residues His63, His65, Asp67, His68, His145, Asp216, and His274 each contribute to the Zn(2+) site. Catalysis depends on Asp67, which acts as the Proton acceptor.

The protein belongs to the RNase Z family. Homodimer. It depends on Zn(2+) as a cofactor.

It catalyses the reaction Endonucleolytic cleavage of RNA, removing extra 3' nucleotides from tRNA precursor, generating 3' termini of tRNAs. A 3'-hydroxy group is left at the tRNA terminus and a 5'-phosphoryl group is left at the trailer molecule.. Functionally, zinc phosphodiesterase, which displays some tRNA 3'-processing endonuclease activity. Probably involved in tRNA maturation, by removing a 3'-trailer from precursor tRNA. The chain is Ribonuclease Z from Streptococcus thermophilus (strain CNRZ 1066).